Here is a 148-residue protein sequence, read N- to C-terminus: Macrodomain Ter protein (148 aa).

Belongs to the MatP family. As to quaternary structure, homodimer.

It localises to the cytoplasm. Its function is as follows. Required for spatial organization of the terminus region of the chromosome (Ter macrodomain) during the cell cycle. Prevents early segregation of duplicated Ter macrodomains during cell division. Binds specifically to matS, which is a 13 bp signature motif repeated within the Ter macrodomain. The sequence is that of Macrodomain Ter protein from Pasteurella multocida (strain Pm70).